A 188-amino-acid polypeptide reads, in one-letter code: MTAPSCAFPVQFRQPSVSGLSQITKSLYISNGVAANNKLMLSSNQITMVINVSVEVVNTLYEDIQYLQVPVADAPDSRLCDFFDPVADHIHSVEMKQGRTLLHCAAGVSRSAALCLAYLMKYHAMSLLDAHTWTKSCRPIIRPNSGFWEQLIHYEFQLFGKNTVHMVSSPMGMIPDIYEKEVRLMIPL.

One can recognise a Tyrosine-protein phosphatase domain in the interval 19 to 160; the sequence is GLSQITKSLY…LIHYEFQLFG (142 aa). Residues 95–141 are sufficient for mitochondrial localization; it reads MKQGRTLLHCAAGVSRSAALCLAYLMKYHAMSLLDAHTWTKSCRPII. The active-site Phosphocysteine intermediate is Cys104.

Belongs to the protein-tyrosine phosphatase family. Non-receptor class dual specificity subfamily.

Its subcellular location is the cytoplasm. It localises to the nucleus. It is found in the mitochondrion inner membrane. The catalysed reaction is O-phospho-L-tyrosyl-[protein] + H2O = L-tyrosyl-[protein] + phosphate. It catalyses the reaction O-phospho-L-seryl-[protein] + H2O = L-seryl-[protein] + phosphate. It carries out the reaction O-phospho-L-threonyl-[protein] + H2O = L-threonyl-[protein] + phosphate. Can dephosphorylate single and diphosphorylated synthetic MAPK peptides, with preference for the phosphotyrosine and diphosphorylated forms over phosphothreonine. In vitro, dephosphorylates p-nitrophenyl phosphate (pNPP). In Pongo abelii (Sumatran orangutan), this protein is Dual specificity protein phosphatase 18 (DUSP18).